A 637-amino-acid polypeptide reads, in one-letter code: MMELKMHNVKGTENLKFDAEVGKVLNIVIHSLYTNKDIFLRELVSNASDACDKLRYESQLNPNLLDSSGELKITISSNKDENELYVTDNGIGMSRQDLIGNLGTIASSGTQKFLDAIKNSKDSSQAVELIGKFGVGFYSSFMVASEVIVESRKAGEEESWVWRSTGDGEYSISKLDNQIPCGTKITLVMRPEENEFLDKFRIENIVTTYSDHINFPVEFIDEEGKSEKLNSKAAIWTKLKNDVTQEEHNDFFRGVAHVGGEPWMILHNKNEGAIEYTNLLYVPSIKPFDLFHPDRRCSVKLYVNKVFITEDNVQIIPQYLRFLKGVVDSPDLPLNISRETLQNNRVVEQIRKSLTKRVISELGKKAKENLEEYTKFWTNFGAVLKEGLCEAMPTEEREALLSICRFHSTGDKKLVSIDDYISRMKPEQGYIYYLTGNSLDSVKNSPQLEGFISKGLEVLLFVDPVDDFWTSVIHEYKGQKFKSVTRADVDLEKFSPEEKDKENKSDEERAEGNTDSILQYFTKVLGNAVKSVKISKKLTDSPVCLAVDEGAMDLRMERFLREQNQLNYRTPKVLEVNTKHSVIKSIIKSYAENGENPTLEDMVHLLFYQACIVEGEEMDDASLFAKKLNNLLGKVII.

The segment at 1-338 is a; substrate-binding; sequence MMELKMHNVK…SPDLPLNISR (338 aa). Residues 339–558 are b; sequence ETLQNNRVVE…EGAMDLRMER (220 aa). Positions 493–512 are disordered; that stretch reads KFSPEEKDKENKSDEERAEG. Positions 559 to 637 are c; it reads FLREQNQLNY…LNNLLGKVII (79 aa).

Belongs to the heat shock protein 90 family. In terms of assembly, homodimer.

It is found in the cytoplasm. Molecular chaperone. Has ATPase activity. This is Chaperone protein HtpG from Wolbachia sp. subsp. Brugia malayi (strain TRS).